Here is an 89-residue protein sequence, read N- to C-terminus: Large ribosomal subunit protein bL27 (89 aa).

Residues 1–21 (MAHKKAGGSSRNGRDSAGRRL) are disordered.

The protein belongs to the bacterial ribosomal protein bL27 family.

The chain is Large ribosomal subunit protein bL27 from Roseobacter denitrificans (strain ATCC 33942 / OCh 114) (Erythrobacter sp. (strain OCh 114)).